The following is a 545-amino-acid chain: Phenylalanine--tRNA ligase beta subunit (545 aa).

The region spanning 268–343 is the B5 domain; the sequence is FLHKIQNVRE…MSIGYNNLEP (76 aa). 4 residues coordinate Mg(2+): aspartate 321, aspartate 327, glutamate 330, and aspartate 331.

This sequence belongs to the phenylalanyl-tRNA synthetase beta subunit family. Type 2 subfamily. Tetramer of two alpha and two beta subunits. Requires Mg(2+) as cofactor.

The protein localises to the cytoplasm. It catalyses the reaction tRNA(Phe) + L-phenylalanine + ATP = L-phenylalanyl-tRNA(Phe) + AMP + diphosphate + H(+). This Saccharolobus islandicus (strain L.S.2.15 / Lassen #1) (Sulfolobus islandicus) protein is Phenylalanine--tRNA ligase beta subunit.